The sequence spans 222 residues: Cytochrome b6 (222 aa).

A helical membrane pass occupies residues 39–59; that stretch reads IFYCLGGITLVCFLVQFATGF. A heme c-binding site is contributed by C42. Positions 93 and 107 each coordinate heme b. Helical transmembrane passes span 97–117, 123–143, and 193–213; these read ASMM…TGGF, LTWM…VTGY, and LHTF…FLMI. Residues H194 and H209 each coordinate heme b.

It belongs to the cytochrome b family. PetB subfamily. The 4 large subunits of the cytochrome b6-f complex are cytochrome b6, subunit IV (17 kDa polypeptide, PetD), cytochrome f and the Rieske protein, while the 4 small subunits are PetG, PetL, PetM and PetN. The complex functions as a dimer. Heme b is required as a cofactor. The cofactor is heme c.

The protein localises to the cellular thylakoid membrane. Functionally, component of the cytochrome b6-f complex, which mediates electron transfer between photosystem II (PSII) and photosystem I (PSI), cyclic electron flow around PSI, and state transitions. The polypeptide is Cytochrome b6 (Crocosphaera subtropica (strain ATCC 51142 / BH68) (Cyanothece sp. (strain ATCC 51142))).